We begin with the raw amino-acid sequence, 189 residues long: Phosphoheptose isomerase (189 aa).

The region spanning 34 to 189 is the SIS domain; sequence LVDALGNGKK…CDLLEKRLFG (156 aa). 49–51 is a substrate binding site; the sequence is NGG. Zn(2+) contacts are provided by histidine 58 and glutamate 62. Substrate is bound by residues glutamate 62, 91–92, 117–119, serine 122, and glutamine 169; these read ND and STS. Positions 169 and 177 each coordinate Zn(2+).

The protein belongs to the SIS family. GmhA subfamily. In terms of assembly, homotetramer. Requires Zn(2+) as cofactor.

The protein resides in the cytoplasm. It carries out the reaction 2 D-sedoheptulose 7-phosphate = D-glycero-alpha-D-manno-heptose 7-phosphate + D-glycero-beta-D-manno-heptose 7-phosphate. It participates in carbohydrate biosynthesis; D-glycero-D-manno-heptose 7-phosphate biosynthesis; D-glycero-alpha-D-manno-heptose 7-phosphate and D-glycero-beta-D-manno-heptose 7-phosphate from sedoheptulose 7-phosphate: step 1/1. In terms of biological role, catalyzes the isomerization of sedoheptulose 7-phosphate in D-glycero-D-manno-heptose 7-phosphate. This chain is Phosphoheptose isomerase, found in Geotalea uraniireducens (strain Rf4) (Geobacter uraniireducens).